The chain runs to 663 residues: Protein-arginine deiminase type-4 (663 aa).

Residues Asn-153, Asp-155, Asp-157, Asp-165, Asp-168, Glu-170, Asp-176, and Asp-179 each contribute to the Ca(2+) site. 3 positions are modified to citrulline: Arg-205, Arg-212, and Arg-218. Gln-349 contacts Ca(2+). Asp-350 is a catalytic residue. Ca(2+)-binding residues include Glu-351, Glu-353, Asp-369, and Ser-370. A Citrulline modification is found at Arg-372. A Ca(2+)-binding site is contributed by Asn-373. A citrulline mark is found at Arg-374 and Arg-383. Residue Arg-374 coordinates substrate. Ca(2+) contacts are provided by Asp-388, Phe-407, Leu-410, and Glu-411. Active-site residues include His-471 and Asp-473. Arg-639 is a binding site for substrate. Cys-645 is an active-site residue.

It belongs to the protein arginine deiminase family. Ca(2+) is required as a cofactor. In terms of processing, autocitrullination at Arg-372 and Arg-374 inactivates the enzyme. As to expression, expressed in eosinophils and neutrophils, not expressed in peripheral monocytes or lymphocytes.

Its subcellular location is the cytoplasm. It is found in the nucleus. The protein localises to the cytoplasmic granule. It carries out the reaction L-arginyl-[protein] + H2O = L-citrullyl-[protein] + NH4(+). Strongly Inhibited by F-amidine and N-alpha-benzoyl-N5-(2-chloro-1-iminoethyl)-L-ornithine amide (Cl-amidine). These inhibitors are however not specific to PADI4 and also inhibit other members of the family. Incorporation of a carboxylate ortho to the backbone amide of Cl-amidine results in inhibitors with increased specificity for PADI4: N-alpha-(2-carboxyl)benzoyl-N(5)-(2-fluoro-1-iminoethyl)-L-ornithine amide (o-F-amidine) and N-alpha-(2-carboxyl)benzoyl-N(5)-(2-chloro-1-iminoethyl)-L-ornithine amide (o-Cl-amidine). Strongly and specifically inhibited by Thr-Asp-F-amidine (TDFA); other members of the family are not inhibited. In terms of biological role, catalyzes the citrullination/deimination of arginine residues of proteins such as histones, thereby playing a key role in histone code and regulation of stem cell maintenance. Citrullinates histone H1 at 'Arg-54' (to form H1R54ci), histone H3 at 'Arg-2', 'Arg-8', 'Arg-17' and/or 'Arg-26' (to form H3R2ci, H3R8ci, H3R17ci, H3R26ci, respectively) and histone H4 at 'Arg-3' (to form H4R3ci). Acts as a key regulator of stem cell maintenance by mediating citrullination of histone H1: citrullination of 'Arg-54' of histone H1 (H1R54ci) results in H1 displacement from chromatin and global chromatin decondensation, thereby promoting pluripotency and stem cell maintenance. Promotes profound chromatin decondensation during the innate immune response to infection in neutrophils by mediating formation of H1R54ci. Required for the formation of neutrophil extracellular traps (NETs); NETs are mainly composed of DNA fibers and are released by neutrophils to bind pathogens during inflammation. Citrullination of histone H3 prevents their methylation by CARM1 and HRMT1L2/PRMT1 and represses transcription. Citrullinates EP300/P300 at 'Arg-2142', which favors its interaction with NCOA2/GRIP1. This Homo sapiens (Human) protein is Protein-arginine deiminase type-4 (PADI4).